The sequence spans 100 residues: Large ribosomal subunit protein bL21 (100 aa).

It belongs to the bacterial ribosomal protein bL21 family. Part of the 50S ribosomal subunit. Contacts protein L20.

Functionally, this protein binds to 23S rRNA in the presence of protein L20. This Deinococcus deserti (strain DSM 17065 / CIP 109153 / LMG 22923 / VCD115) protein is Large ribosomal subunit protein bL21.